The sequence spans 250 residues: Triosephosphate isomerase (250 aa).

9–11 (NWK) contacts substrate. His-95 serves as the catalytic Electrophile. Catalysis depends on Glu-167, which acts as the Proton acceptor. Substrate contacts are provided by residues Gly-173, Ser-213, and 234–235 (GG).

Belongs to the triosephosphate isomerase family. Homodimer.

The protein localises to the cytoplasm. It carries out the reaction D-glyceraldehyde 3-phosphate = dihydroxyacetone phosphate. The protein operates within carbohydrate biosynthesis; gluconeogenesis. It functions in the pathway carbohydrate degradation; glycolysis; D-glyceraldehyde 3-phosphate from glycerone phosphate: step 1/1. Functionally, involved in the gluconeogenesis. Catalyzes stereospecifically the conversion of dihydroxyacetone phosphate (DHAP) to D-glyceraldehyde-3-phosphate (G3P). This chain is Triosephosphate isomerase, found in Herpetosiphon aurantiacus (strain ATCC 23779 / DSM 785 / 114-95).